The sequence spans 495 residues: ATP synthase subunit beta, chloroplastic (495 aa).

ATP is bound at residue 172 to 179 (GGAGVGKT).

Belongs to the ATPase alpha/beta chains family. F-type ATPases have 2 components, CF(1) - the catalytic core - and CF(0) - the membrane proton channel. CF(1) has five subunits: alpha(3), beta(3), gamma(1), delta(1), epsilon(1). CF(0) has four main subunits: a(1), b(1), b'(1) and c(9-12).

It localises to the plastid. It is found in the chloroplast thylakoid membrane. The enzyme catalyses ATP + H2O + 4 H(+)(in) = ADP + phosphate + 5 H(+)(out). Its function is as follows. Produces ATP from ADP in the presence of a proton gradient across the membrane. The catalytic sites are hosted primarily by the beta subunits. The chain is ATP synthase subunit beta, chloroplastic from Convallaria majalis (Lily of the valley).